Reading from the N-terminus, the 446-residue chain is tRNA modification GTPase MnmE (446 aa).

Positions 22, 80, and 119 each coordinate (6S)-5-formyl-5,6,7,8-tetrahydrofolate. The TrmE-type G domain occupies 215-370 (GFKVAIIGKP…LILALENIMN (156 aa)). Position 225 (asparagine 225) interacts with K(+). Residues 225–230 (NVGKSS), 244–250 (SDIAGTT), and 269–272 (DTAG) contribute to the GTP site. Serine 229 lines the Mg(2+) pocket. Residues serine 244, isoleucine 246, and threonine 249 each coordinate K(+). A Mg(2+)-binding site is contributed by threonine 250. Lysine 446 contributes to the (6S)-5-formyl-5,6,7,8-tetrahydrofolate binding site.

This sequence belongs to the TRAFAC class TrmE-Era-EngA-EngB-Septin-like GTPase superfamily. TrmE GTPase family. In terms of assembly, homodimer. Heterotetramer of two MnmE and two MnmG subunits. K(+) is required as a cofactor.

The protein resides in the cytoplasm. In terms of biological role, exhibits a very high intrinsic GTPase hydrolysis rate. Involved in the addition of a carboxymethylaminomethyl (cmnm) group at the wobble position (U34) of certain tRNAs, forming tRNA-cmnm(5)s(2)U34. The sequence is that of tRNA modification GTPase MnmE from Sulfurimonas denitrificans (strain ATCC 33889 / DSM 1251) (Thiomicrospira denitrificans (strain ATCC 33889 / DSM 1251)).